The following is a 928-amino-acid chain: Periplasmic nitrate reductase (928 aa).

Positions 1 to 33 (MAFSRREFLKSAAAASAASAVGMSVPSQLLAQA) form a signal peptide, tat-type signal. A 4Fe-4S Mo/W bis-MGD-type domain is found at 40–96 (WRWDKSVCRFCGTGCGIMVATKNDQIVAVKGDPAAPVNRGLNCIKGYFNAKIMYGAD). Cys-47, Cys-50, Cys-54, and Cys-82 together coordinate [4Fe-4S] cluster. Mo-bis(molybdopterin guanine dinucleotide) is bound by residues Lys-84, Gln-152, Asn-177, Cys-181, 214–221 (WGANMAEM), 265–267 (QTD), Met-422, Gln-426, Asn-532, 557–558 (SD), Lys-580, Asp-607, and 818–827 (TGRVLEHWHS). Trp-894 contacts substrate. Mo-bis(molybdopterin guanine dinucleotide)-binding residues include Asn-902 and Lys-919.

Belongs to the prokaryotic molybdopterin-containing oxidoreductase family. NasA/NapA/NarB subfamily. As to quaternary structure, component of the periplasmic nitrate reductase NapAB complex composed of NapA and NapB. Requires [4Fe-4S] cluster as cofactor. Mo-bis(molybdopterin guanine dinucleotide) serves as cofactor. Post-translationally, predicted to be exported by the Tat system. The position of the signal peptide cleavage has not been experimentally proven.

Its subcellular location is the periplasm. It carries out the reaction 2 Fe(II)-[cytochrome] + nitrate + 2 H(+) = 2 Fe(III)-[cytochrome] + nitrite + H2O. In terms of biological role, catalytic subunit of the periplasmic nitrate reductase complex NapAB. Receives electrons from NapB and catalyzes the reduction of nitrate to nitrite. The sequence is that of Periplasmic nitrate reductase from Wolinella succinogenes (strain ATCC 29543 / DSM 1740 / CCUG 13145 / JCM 31913 / LMG 7466 / NCTC 11488 / FDC 602W) (Vibrio succinogenes).